The following is a 125-amino-acid chain: Late histone H2A.1 (125 aa).

Positions 1–18 (MSGRGKGKAKGTKSKTRS) are enriched in basic residues. Positions 1–21 (MSGRGKGKAKGTKSKTRSSRA) are disordered. N-acetylserine is present on Ser2. Phosphoserine is present on Ser2. Gln104 carries the N5-methylglutamine modification. Residue Lys119 forms a Glycyl lysine isopeptide (Lys-Gly) (interchain with G-Cter in ubiquitin) linkage.

It belongs to the histone H2A family. As to quaternary structure, the nucleosome is a histone octamer containing two molecules each of H2A, H2B, H3 and H4 assembled in one H3-H4 heterotetramer and two H2A-H2B heterodimers. The octamer wraps approximately 147 bp of DNA. Post-translationally, monoubiquitination of Lys-119 gives a specific tag for epigenetic transcriptional repression. In terms of processing, phosphorylation of Ser-2 directly represses transcription.

The protein localises to the nucleus. It is found in the chromosome. Core component of nucleosome. Nucleosomes wrap and compact DNA into chromatin, limiting DNA accessibility to the cellular machineries which require DNA as a template. Histones thereby play a central role in transcription regulation, DNA repair, DNA replication and chromosomal stability. DNA accessibility is regulated via a complex set of post-translational modifications of histones, also called histone code, and nucleosome remodeling. In Psammechinus miliaris (Green sea urchin), this protein is Late histone H2A.1.